A 209-amino-acid chain; its full sequence is Protein-L-isoaspartate O-methyltransferase (209 aa).

The active site involves Ser-60.

It belongs to the methyltransferase superfamily. L-isoaspartyl/D-aspartyl protein methyltransferase family.

It localises to the cytoplasm. It carries out the reaction [protein]-L-isoaspartate + S-adenosyl-L-methionine = [protein]-L-isoaspartate alpha-methyl ester + S-adenosyl-L-homocysteine. Catalyzes the methyl esterification of L-isoaspartyl residues in peptides and proteins that result from spontaneous decomposition of normal L-aspartyl and L-asparaginyl residues. It plays a role in the repair and/or degradation of damaged proteins. The sequence is that of Protein-L-isoaspartate O-methyltransferase from Photobacterium profundum (strain SS9).